The following is a 441-amino-acid chain: UPF0761 membrane protein RSc1559 (441 aa).

Transmembrane regions (helical) follow at residues 44-64 (VLSL…FPMF), 101-121 (GLTA…MLTV), 141-161 (VLVF…SLSV), 182-202 (VVVG…LYVF), 207-227 (LVAW…FEIA), and 248-268 (FAAL…TLLG).

This sequence belongs to the UPF0761 family.

It localises to the cell inner membrane. The chain is UPF0761 membrane protein RSc1559 from Ralstonia nicotianae (strain ATCC BAA-1114 / GMI1000) (Ralstonia solanacearum).